Here is a 589-residue protein sequence, read N- to C-terminus: Aspartate--tRNA ligase (589 aa).

Glutamate 174 serves as a coordination point for L-aspartate. Residues 198 to 201 (QLFK) form an aspartate region. Arginine 220 serves as a coordination point for L-aspartate. Residues 220 to 222 (RDE) and glutamine 229 contribute to the ATP site. Histidine 448 serves as a coordination point for L-aspartate. Residue glutamate 483 coordinates ATP. Arginine 490 contributes to the L-aspartate binding site. An ATP-binding site is contributed by 535–538 (GIDR).

This sequence belongs to the class-II aminoacyl-tRNA synthetase family. Type 1 subfamily. In terms of assembly, homodimer.

It is found in the cytoplasm. The catalysed reaction is tRNA(Asp) + L-aspartate + ATP = L-aspartyl-tRNA(Asp) + AMP + diphosphate. Catalyzes the attachment of L-aspartate to tRNA(Asp) in a two-step reaction: L-aspartate is first activated by ATP to form Asp-AMP and then transferred to the acceptor end of tRNA(Asp). In Xylella fastidiosa (strain 9a5c), this protein is Aspartate--tRNA ligase.